An 822-amino-acid polypeptide reads, in one-letter code: Molybdenum cofactor sulfurase (822 aa).

An N6-(pyridoxal phosphate)lysine modification is found at Lys245. Cys412 is an active-site residue. Positions 658 to 814 constitute an MOSC domain; it reads LRLIRQSSND…LKTYSPIKAI (157 aa).

This sequence belongs to the class-V pyridoxal-phosphate-dependent aminotransferase family. MOCOS subfamily. The cofactor is pyridoxal 5'-phosphate.

The catalysed reaction is Mo-molybdopterin + L-cysteine + AH2 = thio-Mo-molybdopterin + L-alanine + A + H2O. The protein operates within cofactor biosynthesis; molybdopterin biosynthesis. In terms of biological role, sulfurates the molybdenum cofactor. Sulfation of molybdenum is essential for xanthine dehydrogenase (XDH) and aldehyde oxidase (ADO) enzymes in which molybdenum cofactor is liganded by 1 oxygen and 1 sulfur atom in active form. This chain is Molybdenum cofactor sulfurase, found in Bombyx mori (Silk moth).